Here is a 328-residue protein sequence, read N- to C-terminus: Phenylalanine--tRNA ligase alpha subunit (328 aa).

Residue glutamate 245 coordinates Mg(2+).

Belongs to the class-II aminoacyl-tRNA synthetase family. Phe-tRNA synthetase alpha subunit type 1 subfamily. Tetramer of two alpha and two beta subunits. The cofactor is Mg(2+).

The protein resides in the cytoplasm. It catalyses the reaction tRNA(Phe) + L-phenylalanine + ATP = L-phenylalanyl-tRNA(Phe) + AMP + diphosphate + H(+). In Helicobacter pylori (strain ATCC 700392 / 26695) (Campylobacter pylori), this protein is Phenylalanine--tRNA ligase alpha subunit (pheS).